Reading from the N-terminus, the 345-residue chain is RING finger protein 228 (345 aa).

The segment covering 1 to 21 (MAAPASDSGGSQQSPSSSPGS) has biased composition (low complexity). Positions 1–43 (MAAPASDSGGSQQSPSSSPGSREGAGVAAKGAPDCGDAGARDA) are disordered. The RING-type zinc-finger motif lies at 58–125 (CKICYNYFDA…PGAIACPVCR (68 aa)). Residues 159–213 (LPQDRLPPLPARLPAPAAAPPPTPAPPPPPSPAPPQPPPPPPAEDAAPGPRARPG) form a disordered region. Residues 163-201 (RLPPLPARLPAPAAAPPPTPAPPPPPSPAPPQPPPPPPA) show a composition bias toward pro residues. Low complexity predominate over residues 202–213 (EDAAPGPRARPG). 2 consecutive transmembrane segments (helical) span residues 236 to 256 (VCVVFSFLSMVVLLFTGLIFV) and 290 to 310 (LSVASILALFSVVVTWVICWL). The interval 319–345 (AGSTGGSGGGGGPRARAAAGGARRSDT) is disordered. Gly residues predominate over residues 321-331 (STGGSGGGGGP). Residues 332–345 (RARAAAGGARRSDT) are compositionally biased toward low complexity.

It localises to the membrane. The protein is RING finger protein 228 of Homo sapiens (Human).